Reading from the N-terminus, the 452-residue chain is Solute carrier family 52, riboflavin transporter, member 3-B (452 aa).

5 consecutive transmembrane segments (helical) span residues 11–31 (LFGI…PLIV), 38–58 (WLLP…PLFI), 73–93 (PVIY…AFLW), 111–131 (LSFL…PFMM), and 138–158 (LTTY…VALV). 4 N-linked (GlcNAc...) asparagine glycosylation sites follow: Asn-168, Asn-174, Asn-179, and Asn-193. 6 consecutive transmembrane segments (helical) span residues 199–219 (FFLF…LLNL), 285–305 (VFIF…LPSV), 321–341 (AATL…FVPI), 344–364 (LVLM…IMAM), 381–401 (ALIV…KVII), and 412–432 (ALVW…LSMF).

The protein belongs to the riboflavin transporter family.

The protein resides in the cell membrane. The enzyme catalyses riboflavin(in) = riboflavin(out). In terms of biological role, plasma membrane transporter mediating the uptake by cells of the water soluble vitamin B2/riboflavin that plays a key role in biochemical oxidation-reduction reactions of the carbohydrate, lipid, and amino acid metabolism. The chain is Solute carrier family 52, riboflavin transporter, member 3-B (slc52a3b) from Danio rerio (Zebrafish).